The primary structure comprises 254 residues: 3-deoxy-manno-octulosonate cytidylyltransferase (254 aa).

This sequence belongs to the KdsB family.

Its subcellular location is the cytoplasm. It carries out the reaction 3-deoxy-alpha-D-manno-oct-2-ulosonate + CTP = CMP-3-deoxy-beta-D-manno-octulosonate + diphosphate. Its pathway is nucleotide-sugar biosynthesis; CMP-3-deoxy-D-manno-octulosonate biosynthesis; CMP-3-deoxy-D-manno-octulosonate from 3-deoxy-D-manno-octulosonate and CTP: step 1/1. The protein operates within bacterial outer membrane biogenesis; lipopolysaccharide biosynthesis. In terms of biological role, activates KDO (a required 8-carbon sugar) for incorporation into bacterial lipopolysaccharide in Gram-negative bacteria. The sequence is that of 3-deoxy-manno-octulosonate cytidylyltransferase from Haemophilus influenzae (strain ATCC 51907 / DSM 11121 / KW20 / Rd).